We begin with the raw amino-acid sequence, 137 residues long: 15.7 kDa heat shock protein, peroxisomal (137 aa).

The region spanning 15–134 is the sHSP domain; the sequence is QEWSRSTALI…SSKVRNVNIT (120 aa). A Microbody targeting signal motif is present at residues 135–137; the sequence is SKL.

It belongs to the small heat shock protein (HSP20) family. May form oligomeric structures.

The protein resides in the peroxisome. Possesses chaperone activity. In Arabidopsis thaliana (Mouse-ear cress), this protein is 15.7 kDa heat shock protein, peroxisomal (HSP15.7).